Reading from the N-terminus, the 548-residue chain is Pentatricopeptide repeat-containing protein At1g62680, mitochondrial (548 aa).

A mitochondrion-targeting transit peptide spans 1–43 (MQRSIAMTAKRFLHRNLLENGKPRTASSPSFSHCSSCRCWVRA). PPR repeat units follow at residues 84–118 (SIVD…GIRN), 119–153 (DLYT…GYEP), 154–188 (DRVT…GYKP), 189–223 (DIVA…GIRP), 224–258 (NVVT…KITP), 259–293 (NVIT…SIDP), 294–328 (DIVT…GCLA), 329–363 (DVVS…GLVS), 364–398 (NTVT…GISP), 399–433 (DIWT…EMDL), 434–468 (DIVT…GLKP), and 469–503 (DIVT…GLMK).

Belongs to the PPR family. P subfamily.

The protein localises to the mitochondrion. This is Pentatricopeptide repeat-containing protein At1g62680, mitochondrial from Arabidopsis thaliana (Mouse-ear cress).